A 462-amino-acid polypeptide reads, in one-letter code: Kinetochore protein nsk1 (462 aa).

The span at P104–D120 shows a compositional bias: polar residues. Disordered regions lie at residues P104–I161, E180–T240, and N320–S462. A compositionally biased stretch (basic and acidic residues) spans N121–K138. Over residues G146–T156 the composition is skewed to polar residues. Residues E180–K189 show a composition bias toward basic and acidic residues. Over residues K229–T240 the composition is skewed to polar residues. Over residues K324 to G333 the composition is skewed to basic and acidic residues. Over residues W422–D444 the composition is skewed to polar residues. Positions H449 to S462 are enriched in basic residues.

As to quaternary structure, interacts with dlc1. The dlc1-nsk1 complex seems to oligomerize in chain-like structures. Also binds directly to spindle microtubules. Post-translationally, phosphorylated by cdk1 at prometaphase arrest. Phosphorylation prevents nsk1 kinetochore and spindle targeting. Dephosphorylated by clp1 at anaphase onset controls its relocalization.

The protein resides in the nucleus. It is found in the nucleolus. Its subcellular location is the cytoplasm. The protein localises to the cytoskeleton. It localises to the spindle. The protein resides in the chromosome. It is found in the centromere. Its subcellular location is the kinetochore. Ensures chromosome alignment and accurate chromosome segregation during mitosis. Promotes proper kinetochore-microtubule (k-MT) interactions during anaphase B. The phosphorylation status of nsk1 affects the proper k-MT coupling, ensuring that it interacts stably only at the correct time during mitosis. The polypeptide is Kinetochore protein nsk1 (nsk1) (Schizosaccharomyces pombe (strain 972 / ATCC 24843) (Fission yeast)).